Consider the following 294-residue polypeptide: PAK4-inhibitor INKA2 (294 aa).

Disordered regions lie at residues isoleucine 50–methionine 143, proline 170–glycine 198, and leucine 223–threonine 290. Polar residues predominate over residues serine 85–lysine 99. Residues glutamate 134–glutamate 177 form an inka box region. A compositionally biased stretch (basic and acidic residues) spans glutamate 171–glycine 198. Over residues arginine 241–glycine 253 the composition is skewed to basic residues.

This sequence belongs to the INKA family. In terms of assembly, interacts with PAK4.

It localises to the nucleus. In terms of biological role, inhibitor of the serine/threonine-protein kinase PAK4. Acts by binding PAK4 in a substrate-like manner, inhibiting the protein kinase activity. This chain is PAK4-inhibitor INKA2, found in Bos taurus (Bovine).